Reading from the N-terminus, the 242-residue chain is 7-cyano-7-deazaguanine synthase (242 aa).

Residue 14-24 (FSGGQDSATCL) participates in ATP binding. The Zn(2+) site is built by cysteine 202, cysteine 217, cysteine 220, and cysteine 223.

Belongs to the QueC family. It depends on Zn(2+) as a cofactor.

It carries out the reaction 7-carboxy-7-deazaguanine + NH4(+) + ATP = 7-cyano-7-deazaguanine + ADP + phosphate + H2O + H(+). Its pathway is purine metabolism; 7-cyano-7-deazaguanine biosynthesis. In terms of biological role, catalyzes the ATP-dependent conversion of 7-carboxy-7-deazaguanine (CDG) to 7-cyano-7-deazaguanine (preQ(0)). The protein is 7-cyano-7-deazaguanine synthase of Rhodopseudomonas palustris (strain BisA53).